The following is a 305-amino-acid chain: Phosphopantetheine adenylyltransferase (305 aa).

It belongs to the eukaryotic CoaD family.

The protein localises to the cytoplasm. Its subcellular location is the nucleus. It catalyses the reaction (R)-4'-phosphopantetheine + ATP + H(+) = 3'-dephospho-CoA + diphosphate. In terms of biological role, reversibly transfers an adenylyl group from ATP to 4'-phosphopantetheine, yielding dephospho-CoA (dPCoA) and pyrophosphate. Plays a role in the physiological regulation of the intracellular CoA concentration. The polypeptide is Phosphopantetheine adenylyltransferase (CAB4) (Saccharomyces cerevisiae (strain ATCC 204508 / S288c) (Baker's yeast)).